The primary structure comprises 131 residues: Sec-independent protein translocase protein TatB (131 aa).

Residues 2–22 (FDGIGFMELLLIGILGLVVLG) traverse the membrane as a helical segment. Composition is skewed to polar residues over residues 68 to 83 (ESQGLKNLSPELQDSI) and 116 to 131 (AEKSTTTGANSDKPNG). The disordered stretch occupies residues 68–131 (ESQGLKNLSP…TGANSDKPNG (64 aa)).

This sequence belongs to the TatB family. In terms of assembly, the Tat system comprises two distinct complexes: a TatABC complex, containing multiple copies of TatA, TatB and TatC subunits, and a separate TatA complex, containing only TatA subunits. Substrates initially bind to the TatABC complex, which probably triggers association of the separate TatA complex to form the active translocon.

The protein localises to the cell inner membrane. Part of the twin-arginine translocation (Tat) system that transports large folded proteins containing a characteristic twin-arginine motif in their signal peptide across membranes. Together with TatC, TatB is part of a receptor directly interacting with Tat signal peptides. TatB may form an oligomeric binding site that transiently accommodates folded Tat precursor proteins before their translocation. This Shewanella pealeana (strain ATCC 700345 / ANG-SQ1) protein is Sec-independent protein translocase protein TatB.